A 237-amino-acid polypeptide reads, in one-letter code: Phosphoribosylaminoimidazole-succinocarboxamide synthase (237 aa).

This sequence belongs to the SAICAR synthetase family.

The enzyme catalyses 5-amino-1-(5-phospho-D-ribosyl)imidazole-4-carboxylate + L-aspartate + ATP = (2S)-2-[5-amino-1-(5-phospho-beta-D-ribosyl)imidazole-4-carboxamido]succinate + ADP + phosphate + 2 H(+). Its pathway is purine metabolism; IMP biosynthesis via de novo pathway; 5-amino-1-(5-phospho-D-ribosyl)imidazole-4-carboxamide from 5-amino-1-(5-phospho-D-ribosyl)imidazole-4-carboxylate: step 1/2. The chain is Phosphoribosylaminoimidazole-succinocarboxamide synthase from Pectobacterium atrosepticum (strain SCRI 1043 / ATCC BAA-672) (Erwinia carotovora subsp. atroseptica).